A 105-amino-acid chain; its full sequence is Putative neurotoxin 10 (105 aa).

Residues Met1–Ala21 form the signal peptide.

It belongs to the scolopendra neurotoxin 10 family. Post-translationally, contains 3 disulfide bonds. Expressed by the venom gland.

It is found in the secreted. The protein is Putative neurotoxin 10 of Scolopendra subspinipes (Vietnamese centipede).